The following is a 440-amino-acid chain: MSNQGAFEGAANVESGSRVFVYEVVGMRQNEETDQTNYPIRKSGSVFIRVPYNRMNQEMQRITRLGGKIVSIQTVSALQQLNGKTTIATVTDASSETAKSEGNGKATPVKTDSGAKGFAKPPAEEQLKKKDNKGNTMTQAKAKHADVPVNLYRPNAPFIGKVISNEPLVKEGGIGIVQHIKFDLTGGNLKYIEGQSIGIIPPGVDKNGKPEKLRLYSIASTRHGDDVDDKTISLCVRQLEYKHPETGETVYGVCSTYLTHIEPGSEVKITGPVGKEMLLPDDPEANVIMLATGTGIAPMRTYLWRMFKDAERAANPEYQFKGFSWLVFGVPTTPNILYKEELEEIQQKYPDNFRLTYAISREQKNPQGGRMYIQDRVAEHADELWQLIKNEKTHTYICGLRGMEEGIDAALSAAAAKEGVTWSDYQKDLKKAGRWHVETY.

The CpcD-like domain occupies 17–75; sequence SRVFVYEVVGMRQNEETDQTNYPIRKSGSVFIRVPYNRMNQEMQRITRLGGKIVSIQTV. The disordered stretch occupies residues 93-142; sequence ASSETAKSEGNGKATPVKTDSGAKGFAKPPAEEQLKKKDNKGNTMTQAKA. A compositionally biased stretch (basic and acidic residues) spans 122–133; the sequence is PAEEQLKKKDNK. Positions 155–279 constitute an FAD-binding FR-type domain; sequence NAPFIGKVIS…TGPVGKEMLL (125 aa). FAD-binding positions include 214-217, 235-237, Tyr241, 253-255, and Thr294; these read RLYS, CVR, and VCS. Ser217 and Arg237 together coordinate NADP(+). NADP(+) contacts are provided by residues Thr294, 330-331, 360-361, 370-374, 399-400, and Glu438; these read VP, SR, RMYIQ, and GL.

This sequence belongs to the ferredoxin--NADP reductase type 1 family. It depends on FAD as a cofactor.

The protein localises to the cellular thylakoid membrane. It catalyses the reaction 2 reduced [2Fe-2S]-[ferredoxin] + NADP(+) + H(+) = 2 oxidized [2Fe-2S]-[ferredoxin] + NADPH. The polypeptide is Ferredoxin--NADP reductase (petH) (Trichormus variabilis (strain ATCC 29413 / PCC 7937) (Anabaena variabilis)).